A 1082-amino-acid chain; its full sequence is RhoGEF domain-containing protein gxcI (1082 aa).

Positions 1 to 15 are enriched in polar residues; it reads MRKNSTSNPSPSHQF. Disordered stretches follow at residues 1–29, 59–78, 91–394, 438–488, and 504–524; these read MRKN…VNNN, DKNQ…VLPQ, YNEQ…VTSL, KQAS…SVSN, and INSF…SLSL. 5 stretches are compositionally biased toward low complexity: residues 20-29, 62-71, 96-109, 116-160, and 170-184; these read KNTTTVVNNN, QQQQQQQQQQ, PSSS…SSSP, LLST…SGSP, and PTIL…RQLP. Residues 185-206 show a composition bias toward pro residues; sequence TRPPSPLPKLPSRPTSPVPPNP. A compositionally biased stretch (low complexity) spans 211–244; it reads NTTTTNNNNNNNNNNNNNNNNNNNNNNNNNNNNN. Pro residues predominate over residues 262–276; that stretch reads PIPPPNDKPAPPPRP. Over residues 282 to 366 the composition is skewed to low complexity; it reads TLTTPPTIAT…NNNNNSNNNK (85 aa). A compositionally biased stretch (pro residues) spans 367–379; the sequence is PLPPTSTKPPRPK. Residues 450 to 473 are compositionally biased toward low complexity; that stretch reads SSLSLSTTPTSVSPSTPSSANPTP. The DH domain occupies 622–817; it reads SFNKVIKEII…EKIVNDINGK (196 aa). Residues 838-994 form a PH-like region; the sequence is QQLRDQTFLK…NDIDEAINIL (157 aa). Disordered regions lie at residues 920–961 and 1017–1060; these read NNNN…NSTP and NNNN…NSNN.

GTPase-activating protein. The polypeptide is RhoGEF domain-containing protein gxcI (gxcI) (Dictyostelium discoideum (Social amoeba)).